A 161-amino-acid polypeptide reads, in one-letter code: Phosphopantetheine adenylyltransferase (161 aa).

Residue T9 coordinates substrate. ATP is bound by residues 9 to 10 and H17; that span reads TF. Residues K41, L73, and R87 each coordinate substrate. Residues 88-90, E98, and 123-129 contribute to the ATP site; these read GLR and YQFISGT.

It belongs to the bacterial CoaD family. Homohexamer. Mg(2+) serves as cofactor.

It localises to the cytoplasm. It carries out the reaction (R)-4'-phosphopantetheine + ATP + H(+) = 3'-dephospho-CoA + diphosphate. It participates in cofactor biosynthesis; coenzyme A biosynthesis; CoA from (R)-pantothenate: step 4/5. Functionally, reversibly transfers an adenylyl group from ATP to 4'-phosphopantetheine, yielding dephospho-CoA (dPCoA) and pyrophosphate. The chain is Phosphopantetheine adenylyltransferase from Cupriavidus pinatubonensis (strain JMP 134 / LMG 1197) (Cupriavidus necator (strain JMP 134)).